Reading from the N-terminus, the 403-residue chain is F-box protein At2g40925 (403 aa).

In terms of domain architecture, F-box spans 21-71 (NRHDCEIPPDLMIEILIRLPTKSFMRFKCVSKQWSPLISGRYFCNRLFTCV).

This chain is F-box protein At2g40925, found in Arabidopsis thaliana (Mouse-ear cress).